The sequence spans 834 residues: Glycerol-3-phosphate acyltransferase (834 aa).

An HXXXXD motif motif is present at residues 309–314 (CHRSHI).

This sequence belongs to the GPAT/DAPAT family.

It localises to the cell inner membrane. The enzyme catalyses sn-glycerol 3-phosphate + an acyl-CoA = a 1-acyl-sn-glycero-3-phosphate + CoA. It functions in the pathway phospholipid metabolism; CDP-diacylglycerol biosynthesis; CDP-diacylglycerol from sn-glycerol 3-phosphate: step 1/3. This chain is Glycerol-3-phosphate acyltransferase, found in Pseudomonas fluorescens (strain Pf0-1).